Reading from the N-terminus, the 328-residue chain is Malate dehydrogenase (328 aa).

An NAD(+)-binding site is contributed by 13–19 (GAAGQIS). The substrate site is built by Arg94 and Arg100. Residues Asn107, Gln114, and 131–133 (VGN) each bind NAD(+). Substrate contacts are provided by Asn133 and Arg164. His189 acts as the Proton acceptor in catalysis.

Belongs to the LDH/MDH superfamily. MDH type 2 family.

The enzyme catalyses (S)-malate + NAD(+) = oxaloacetate + NADH + H(+). Catalyzes the reversible oxidation of malate to oxaloacetate. The chain is Malate dehydrogenase from Alcanivorax borkumensis (strain ATCC 700651 / DSM 11573 / NCIMB 13689 / SK2).